Reading from the N-terminus, the 976-residue chain is Ephrin type-B receptor 4b (976 aa).

The signal sequence occupies residues 1–23 (MDRVCWIMALSWFWMVSTGLVSA). The Extracellular portion of the chain corresponds to 24-541 (EEEVLMNTKL…ESPSRLMLTG (518 aa)). The region spanning 25–204 (EEVLMNTKLE…FFKKCPAVSR (180 aa)) is the Eph LBD domain. Cystine bridges form between Cys-69/Cys-186 and Cys-103/Cys-113. 2 consecutive Fibronectin type-III domains span residues 326–434 (PPSA…TSRD) and 438–529 (PVSG…TLPD). The helical transmembrane segment at 542 to 562 (VLVAIGLLILIAVVIVAVFCF) threads the bilayer. Residues 563-976 (RRSTRRRDPD…LRIHGGSLRY (414 aa)) lie on the Cytoplasmic side of the membrane. One can recognise a Protein kinase domain in the interval 613-897 (VKIEEVIGAG…IPDGPSHPLL (285 aa)). ATP is bound by residues 619 to 627 (IGAGEFGEV) and Lys-645. Asp-738 acts as the Proton acceptor in catalysis. The SAM domain maps to 906 to 970 (SHCSSVADWL…LSSVQTLRIH (65 aa)).

It belongs to the protein kinase superfamily. Tyr protein kinase family. Ephrin receptor subfamily.

The protein localises to the cell membrane. The catalysed reaction is L-tyrosyl-[protein] + ATP = O-phospho-L-tyrosyl-[protein] + ADP + H(+). Receptor tyrosine kinase which binds promiscuously transmembrane ephrin-B family ligands residing on adjacent cells, leading to contact-dependent bidirectional signaling into neighboring cells. The signaling pathway downstream of the receptor is referred to as forward signaling while the signaling pathway downstream of the ephrin ligand is referred to as reverse signaling. Together with its cognate ligand/functional ligand EFNB2 is involved in the regulation of cell adhesion and cell migration, and plays a central role in heart morphogenesis, angiogenesis and blood vessel remodeling and permeability. EPHB4-mediated forward signaling controls cellular repulsion and segregation from EFNB2-expressing cells. Involved in somitogenesis. The sequence is that of Ephrin type-B receptor 4b from Danio rerio (Zebrafish).